The primary structure comprises 136 residues: ATP synthase epsilon chain, chloroplastic (136 aa).

This sequence belongs to the ATPase epsilon chain family. As to quaternary structure, F-type ATPases have 2 components, CF(1) - the catalytic core - and CF(0) - the membrane proton channel. CF(1) has five subunits: alpha(3), beta(3), gamma(1), delta(1), epsilon(1). CF(0) has three main subunits: a, b and c.

The protein localises to the plastid. Its subcellular location is the chloroplast thylakoid membrane. Functionally, produces ATP from ADP in the presence of a proton gradient across the membrane. This is ATP synthase epsilon chain, chloroplastic from Tetradesmus obliquus (Green alga).